Consider the following 127-residue polypeptide: Fluoride-specific ion channel FluC (127 aa).

The next 4 helical transmembrane spans lie at 4-24 (LLLA…FLSM), 35-55 (LGTL…LAWF), 71-91 (TGFC…VFLL), and 103-123 (IAVN…LFSA). Na(+)-binding residues include glycine 75 and threonine 78.

It belongs to the fluoride channel Fluc/FEX (TC 1.A.43) family.

The protein resides in the cell inner membrane. The catalysed reaction is fluoride(in) = fluoride(out). Its activity is regulated as follows. Na(+) is not transported, but it plays an essential structural role and its presence is essential for fluoride channel function. In terms of biological role, fluoride-specific ion channel. Important for reducing fluoride concentration in the cell, thus reducing its toxicity. The chain is Fluoride-specific ion channel FluC from Enterobacter sp. (strain 638).